The chain runs to 230 residues: 3,4-dihydroxy-2-butanone 4-phosphate synthase (230 aa).

D-ribulose 5-phosphate is bound by residues 38 to 39 (RE), Asp-43, 151 to 155 (RRGHT), and Glu-175. Glu-39 lines the Mg(2+) pocket. Position 154 (His-154) interacts with Mg(2+).

The protein belongs to the DHBP synthase family. Homodimer. Mg(2+) is required as a cofactor. Mn(2+) serves as cofactor.

It catalyses the reaction D-ribulose 5-phosphate = (2S)-2-hydroxy-3-oxobutyl phosphate + formate + H(+). The protein operates within cofactor biosynthesis; riboflavin biosynthesis; 2-hydroxy-3-oxobutyl phosphate from D-ribulose 5-phosphate: step 1/1. Catalyzes the conversion of D-ribulose 5-phosphate to formate and 3,4-dihydroxy-2-butanone 4-phosphate. In Vibrio harveyi (Beneckea harveyi), this protein is 3,4-dihydroxy-2-butanone 4-phosphate synthase.